We begin with the raw amino-acid sequence, 65 residues long: Small ribosomal subunit protein bS21 (65 aa).

The tract at residues 45–65 (GRLKRSRSRRRAQRANEERNS) is disordered. The span at 48–57 (KRSRSRRRAQ) shows a compositional bias: basic residues.

Belongs to the bacterial ribosomal protein bS21 family.

In Pelodictyon phaeoclathratiforme (strain DSM 5477 / BU-1), this protein is Small ribosomal subunit protein bS21.